The following is a 343-amino-acid chain: MAAEEEDEVEWVVESIAGFLRGPDWSIPILDFVEQKCEVFDDEEESKLTYTEIHQEYKELVEKLLESYLKEIGINEDQFQEACTSPLAKTRTSQAILQPVLAAEDFTIFKAMMVQKNIEMQLQAIRIIQERNGVLPDCLTDGADVVSDLEQEEMKILREVLRKSKEEYDQEEERKRKKQSSEAKMEELPVYTSEAEKMSNSQGDGEHFVQPPSEVKVHFANQSVQPLARKMELLPETSSLTQKGLKIPGLEHASMEGPIANLSALGTEELRQREHYLKQKRDKLLSMRKDTRTKQIQNTEQKGKPTREAEEMTEKPEMTAEEKQTLLKRRLLAEKLKEEVINK.

Phosphoserine is present on residues Ser-85 and Ser-147. Positions 147–187 form a coiled coil; it reads SDLEQEEMKILREVLRKSKEEYDQEEERKRKKQSSEAKMEE. The tract at residues 165–188 is disordered; sequence KEEYDQEEERKRKKQSSEAKMEEL. Ser-201 carries the post-translational modification Phosphoserine. 2 stretches are compositionally biased toward basic and acidic residues: residues 279–293 and 301–323; these read QKRD…DTRT and QKGK…AEEK. The segment at 279 to 323 is disordered; sequence QKRDKLLSMRKDTRTKQIQNTEQKGKPTREAEEMTEKPEMTAEEK.

The protein belongs to the CFAP36 family. As to quaternary structure, interacts with ARL3.

The protein resides in the nucleus. It is found in the cytoplasm. It localises to the cell projection. Its subcellular location is the cilium. The protein localises to the flagellum. Functionally, may act as an effector for ARL3. The polypeptide is Cilia- and flagella-associated protein 36 (Mus musculus (Mouse)).